Here is a 233-residue protein sequence, read N- to C-terminus: uncharacterized protein (233 aa).

A the nascent chain stimulates ribosomal stalling during translation by interfering with the conformation of the peptidyl transferase center (PTC), and the translating mRNA by adopting a difficult-to-decode structure at the ribosome decoding center region spans residues 196–212; it reads FFYEDYLIFDCRAKRRK.

In terms of biological role, acts as an endogenous target of the ribosome quality control (RQC) pathway. During translation, the nascent chain has a propensity to stall ribosomes, thereby stimulating activation of the RQC pathway. This is an uncharacterized protein from Saccharomyces cerevisiae (strain ATCC 204508 / S288c) (Baker's yeast).